The sequence spans 186 residues: Adrenodoxin, mitochondrial (186 aa).

The transit peptide at 1–58 directs the protein to the mitochondrion; that stretch reads MAVRLLRVASAALGDTAVRWQPLVGPRAGNRGPGGSIWLGLGGRAAAARTLSLSARAW. At Ser-61 the chain carries Phosphoserine. Lys-64 carries the N6-acetyllysine; alternate modification. Lys-64 is subject to N6-succinyllysine; alternate. A 2Fe-2S ferredoxin-type domain is found at 65 to 169; it reads ITVHFINRDG…NMTVRVPEAV (105 aa). [2Fe-2S] cluster contacts are provided by Cys-104, Cys-110, Cys-113, and Cys-150. An N6-succinyllysine modification is found at Lys-156. The residue at position 175 (Ser-175) is a Phosphoserine.

Belongs to the adrenodoxin/putidaredoxin family. As to quaternary structure, interacts with CYP11A1. The cofactor is [2Fe-2S] cluster.

The protein resides in the mitochondrion matrix. Its function is as follows. Essential for the synthesis of various steroid hormones. Participates in the reduction of mitochondrial cytochrome P450 for steroidogenesis. Transfers electrons from adrenodoxin reductase to CYP11A1, a cytochrome P450 that catalyzes cholesterol side-chain cleavage. Does not form a ternary complex with adrenodoxin reductase and CYP11A1 but shuttles between the two enzymes to transfer electrons. In Sus scrofa (Pig), this protein is Adrenodoxin, mitochondrial (FDX1).